Reading from the N-terminus, the 1464-residue chain is MGRVGYWTLLVLPALLVWRGPAPSAAAEKGPPALNIAVMLGHSHDVTERELRTLWGPEQAAGLPLDVNVVALLMNRTDPKSLITHVCDLMSGARIHGLVFGDDTDQEAVAQMLDFISSHTFVPILGIHGGASMIMNDKDPTSTFFQFGASIQQQATVMLKIMQDYDWHVFSLVTTIFPGYREFISFVKTTVDNSFVGWDMQNVITLDTSFEDAKTQVQLKKIHSSVILLYCSKDEAVLILSEARSLGLTGYDFFWIVPSLVSGNTELIPKEFPSGLISVSYDDWDYSLEARVRDGIGILTTAASSMLEKFSYIPEAKASCYGQMERPEVPMHTLHPFMVNVTWDGKDLSFTEEGYQVHPRLVVIVLNKDREWEKVGKWENHTLSLRHAVWPRYKSFSDCEPDDNHLSIVTLEEAPFVIVEDIDPLTETCVRNTVPCRKFVKINNSTNEGMNVKKCCKGFCIDILKKLSRTVKFTYDLYLVTNGKHGKKVNNVWNGMIGEVVYQRAVMAVGSLTINEERSEVVDFSVPFVETGISVMVSRSNGTVSPSAFLEPFSASVWVMMFVMLLIVSAIAVFVFEYFSPVGYNRNLAKGKAPHGPSFTIGKAIWLLWGLVFNNSVPVQNPKGTTSKIMVSVWAFFAVIFLASYTANLAAFMIQEEFVDQVTGLSDKKFQRPHDYSPPFRFGTVPNGSTERNIRNNYPYMHQYMTKFNQKGVEDALVSLKTGKLDAFIYDAAVLNYKAGRDEGCKLVTIGSGYIFATTGYGIALQKGSPWKRQIDLALLQFVGDGEMEELETLWLTGICHNEKNEVMSSQLDIDNMAGVFYMLAAAMALSLITFIWEHLFYWKLRFCFTGVCSDRPGLLFSISRGIYSCIHGVHIEEKKKSPDFNLTGSQSNMLKLLRSAKNISNMSNMNSSRMDSPKRAADFIQRGSLIMDMVSDKGNLMYSDNRSFQGKESIFGDNMNELQTFVANRQKDNLNNYVFQGQHPLTLNESNPNTVEVAVSTESKVNSRPRQLWKKSVDSIRQDSLSQNPVSQRDEATAENRTHSLKSPRYLPEEMAHSDISETSNRATCHREPDNSKNPKTKDNFKRSVASKYPKDCSEVERTYLKTKSSSPRDKIYTIDGEKEPGFHLDPPQFVENVTLPENVDFPDPYQDPSENLRKGDSTLPMNRNPLQNEEGLSNNDQYKLYSKHFTLKDKGSPHSETSERYRQNSTHCRSCLSNLPTYSGHFTMRSPFKCDACLRMGNLYDIDEDQMLQETGNPATGEQVYQQDWAQNNALQLQKNKLRISRQHSYDNIVDKPRELDLSRPSRSISLKDRERLLEGNFYGSLFSVPSSKLSGKKSSLFPQGLEDSKRSKSLLPDHTSDNPFLHSHRDDQRLVIGRCPSDPYKHSLPSQAVNDSYLRSSLRSTASYCSRDSRGHNDVYISEHVMPYAANKNNMYSTPRVLNSCSNRRVYKKMPSIESDV.

Positions 1-22 are cleaved as a signal peptide; sequence MGRVGYWTLLVLPALLVWRGPA. Over 23 to 556 the chain is Extracellular; sequence PSAAAEKGPP…SAFLEPFSAS (534 aa). Histidine 44 is a binding site for Zn(2+). Residue asparagine 75 is glycosylated (N-linked (GlcNAc...) asparagine). A disulfide bridge connects residues cysteine 87 and cysteine 320. The Zn(2+) site is built by histidine 128, glutamate 266, and aspartate 282. N-linked (GlcNAc...) asparagine glycosylation is found at asparagine 340, asparagine 380, asparagine 443, and asparagine 444. Cystine bridges form between cysteine 429–cysteine 455 and cysteine 436–cysteine 456. L-glutamate-binding residues include serine 511, threonine 513, and arginine 518. Asparagine 541 is a glycosylation site (N-linked (GlcNAc...) asparagine). The helical transmembrane segment at 557-576 threads the bilayer; that stretch reads VWVMMFVMLLIVSAIAVFVF. Over 577-600 the chain is Cytoplasmic; the sequence is EYFSPVGYNRNLAKGKAPHGPSFT. The interval 599-620 is pore-forming; that stretch reads FTIGKAIWLLWGLVFNNSVPVQ. Positions 601-615 form an intramembrane region, discontinuously helical; the sequence is IGKAIWLLWGLVFNN. Over 616–625 the chain is Cytoplasmic; sequence SVPVQNPKGT. A helical membrane pass occupies residues 626-646; that stretch reads TSKIMVSVWAFFAVIFLASYT. At 647–814 the chain is on the extracellular side; the sequence is ANLAAFMIQE…NEVMSSQLDI (168 aa). The N-linked (GlcNAc...) asparagine glycan is linked to asparagine 687. Residues serine 689, threonine 690, and aspartate 731 each coordinate L-glutamate. A disulfide bond links cysteine 745 and cysteine 800. The chain crosses the membrane as a helical span at residues 815–835; that stretch reads DNMAGVFYMLAAAMALSLITF. Residues 836–1464 lie on the Cytoplasmic side of the membrane; it reads IWEHLFYWKL…KKMPSIESDV (629 aa). Phosphoserine occurs at positions 882, 890, and 929. 2 stretches are compositionally biased toward polar residues: residues 1001–1010 and 1023–1032; these read STESKVNSRP and QDSLSQNPVS. Disordered stretches follow at residues 1001-1088 and 1148-1180; these read STES…NFKR and PDPY…GLSN. Serine 1025 carries the post-translational modification Phosphoserine. Composition is skewed to basic and acidic residues over residues 1033–1043 and 1052–1061; these read QRDEATAENRT and LPEEMAHSDI. Serine 1059 and serine 1062 each carry phosphoserine. Basic and acidic residues predominate over residues 1070 to 1087; sequence CHREPDNSKNPKTKDNFK. The span at 1165–1180 shows a compositional bias: polar residues; that stretch reads LPMNRNPLQNEEGLSN. 2 positions are modified to phosphoserine: serine 1198 and serine 1291. The disordered stretch occupies residues 1335–1372; it reads KLSGKKSSLFPQGLEDSKRSKSLLPDHTSDNPFLHSHR. The PDZ-binding signature appears at 1462–1464; that stretch reads SDV.

The protein belongs to the glutamate-gated ion channel (TC 1.A.10.1) family. NR2A/GRIN2A subfamily. In terms of assembly, heterotetramer. Forms heterotetrameric channels composed of two GluN1/zeta subunits (GRIN1), and two identical GluN2/epsilon subunits (GRIN2A, GRIN2B, GRIN2C or GRIN2D) or GluN3 subunits (GRIN3A or GRIN3B) (in vitro). Can also form heterotetrameric channels that contain at least two GluN1 subunits and at least two different GluN2 subunits (or a combination of one GluN2 and one GluN3 subunits) (in vitro). In vivo, the subunit composition may depend on the expression levels of the different subunits. Found in a complex with GRIN1, GRIN3A and PPP2CB. Found in a complex with GRIN1 and GRIN3B. Interacts with AIP1. Interacts with HIP1 and NETO1. Interacts with SNX27 (via PDZ domain); the interaction is required for recycling to the plasma membrane when endocytosed and prevent degradation in lysosomes. Interacts with PDZ domains of PATJ and DLG4. Interacts with LRFN2. Interacts with RPH3A and DLG4; this ternary complex regulates NMDA receptor composition at postsynaptic membranes. Interacts with SORCS2. Interacts with ARC; preventing ARC oligomerization. Interacts (via the extreme C-terminus) with FRMPD2 (the second PDZ domain); the interaction is direct and is likely to promote NMDAR-mediated neural signal transmission. GRIN2A binds FRMPD2 with lower affinity than GRIN2B.

The protein resides in the cell projection. It is found in the dendritic spine. It localises to the cell membrane. The protein localises to the synapse. Its subcellular location is the postsynaptic cell membrane. The protein resides in the cytoplasmic vesicle membrane. The catalysed reaction is Ca(2+)(in) = Ca(2+)(out). It carries out the reaction Na(+)(in) = Na(+)(out). The enzyme catalyses K(+)(in) = K(+)(out). Its function is as follows. Component of N-methyl-D-aspartate (NMDA) receptors (NMDARs) that function as heterotetrameric, ligand-gated cation channels with high calcium permeability and voltage-dependent block by Mg(2+). NMDARs participate in synaptic plasticity for learning and memory formation by contributing to the slow phase of excitatory postsynaptic current, long-term synaptic potentiation, and learning. Channel activation requires binding of the neurotransmitter L-glutamate to the GluN2 subunit, glycine or D-serine binding to the GluN1 subunit, plus membrane depolarization to eliminate channel inhibition by Mg(2+). NMDARs mediate simultaneously the potasium efflux and the influx of calcium and sodium. Each GluN2 subunit confers differential attributes to channel properties, including activation, deactivation and desensitization kinetics, pH sensitivity, Ca2(+) permeability, and binding to allosteric modulators. Participates in the synaptic plasticity regulation through activation by the L-glutamate releaseed by BEST1, into the synaptic cleft, upon F2R/PAR-1 activation in astrocyte. The polypeptide is Glutamate receptor ionotropic, NMDA 2A (Pan troglodytes (Chimpanzee)).